The sequence spans 361 residues: MSEELTLQLIDLHAGGDVSRIVTGGIDPLPGNTVREKMEYLREDADGLRQLLLSEPYGIPEMSVDLLVPASDPEAEVGYIIMEVMGYPIYSGSNTICTATAVLESGLVPKREGHQRFILESAAGLVHIEARVENGVVEAITCEGLPSYIDTYRASIHVPSVGDVTYSVAYSGGFYAMVDAAELGFSLNRDEEARLAECAHAIVEAIQAERGFSHYTLGDVGPLPFLHFMGPVEQVADGFFRSRSTTYVHPGVICRSTTGTGTSARLALMHHEGTLQPGDKLETVSLRGTGFIGEFTGSRQEGDHRVAENTITGKAHMLARSDIVINCNDPLVECGSLHHILTSGHRRTEALPVEEEVSLSD.

Serine 91 acts as the Proton acceptor in catalysis. Substrate contacts are provided by residues 92–93 (GS) and 259–260 (GT).

It belongs to the proline racemase family.

The catalysed reaction is trans-4-hydroxy-L-proline = cis-4-hydroxy-D-proline. Functionally, in vitro, catalyzes the epimerization of trans-4-hydroxy-L-proline (t4LHyp) to cis-4-hydroxy-D-proline (c4DHyp), albeit with very low efficiency. The physiological substrate may be different. Displays neither proline racemase activity nor t3LHyp dehydratase activity. In Chromohalobacter salexigens (strain ATCC BAA-138 / DSM 3043 / CIP 106854 / NCIMB 13768 / 1H11), this protein is Protein Csal_2339.